Reading from the N-terminus, the 269-residue chain is MGWFWADQKTTGKDIGGAAVSSMSGCPVMHESSSSSPPSSECPVMQGDNDRINPLNNMPELAASKQPGQKMDLPVDRTISSIPKSPDSNEFWEYPSPQQMYNAMVRKGKIGGSGEVAEDAVESMVQVHNFLNEGCWQEVLEWEKPHTDESHVQPKLLKFMGKPGVLSPRARWMHLCGLLFPSHFSQELPFDRHDWIVLRGERKAEQQPPTFKEVRYVLDFYGGPDDENGMPTFHVDVRPALDSLDNAKDRMTRFLDRMISGPSSSSSAP.

Positions methionine 1–aspartate 72 are disordered. 2 HRM repeats span residues glycine 25–histidine 30 and glutamate 41–glutamine 46.

The protein belongs to the cytochrome c-type heme lyase family.

The protein resides in the mitochondrion inner membrane. It localises to the mitochondrion intermembrane space. The catalysed reaction is holo-[cytochrome c] = apo-[cytochrome c] + heme b. Its function is as follows. Lyase that catalyzes the covalent linking of the heme group to the cytochrome C apoprotein to produce the mature functional cytochrome. This is Holocytochrome-c synthase (CYC3) from Saccharomyces cerevisiae (strain ATCC 204508 / S288c) (Baker's yeast).